A 121-amino-acid chain; its full sequence is UPF0344 protein BT9727_1053 (121 aa).

4 helical membrane passes run 6–26 (ITAW…YSAG), 38–58 (LMYI…MKTA), 65–85 (WYGL…MVLV), and 92–112 (ATGA…YLGL).

This sequence belongs to the UPF0344 family.

It is found in the cell membrane. This is UPF0344 protein BT9727_1053 from Bacillus thuringiensis subsp. konkukian (strain 97-27).